The chain runs to 79 residues: Major outer membrane lipoprotein Lpp 2 (79 aa).

Residues 1-21 form the signal peptide; that stretch reads MNRTNKLILGAVVLGSTLLAG. A lipid anchor (N-palmitoyl cysteine) is attached at C22. C22 is lipidated: S-diacylglycerol cysteine. 2 consecutive repeats follow at residues 25-35 and 39-49; these read NAKIDQLSSDV and SAKVDQLSNDV. Residues 28-69 adopt a coiled-coil conformation; that stretch reads IDQLSSDVQTLSAKVDQLSNDVNAMRSDVQAAKDDAARANQR. An N6-murein peptidoglycan lysine modification is found at K79.

It belongs to the Lpp family. Homotrimer.

Its subcellular location is the cell outer membrane. It localises to the secreted. The protein resides in the cell wall. A highly abundant outer membrane lipoprotein that controls the distance between the inner and outer membranes. The only protein known to be covalently linked to the peptidoglycan network (PGN). Also non-covalently binds the PGN. The link between the cell outer membrane and PGN contributes to maintenance of the structural and functional integrity of the cell envelope, and maintains the correct distance between the PGN and the outer membrane. The sequence is that of Major outer membrane lipoprotein Lpp 2 from Salmonella typhi.